Reading from the N-terminus, the 920-residue chain is Isoleucine--tRNA ligase (920 aa).

The 'HIGH' region signature appears at 58–68; it reads PYANGHLHLGH. Glutamate 569 contacts L-isoleucyl-5'-AMP. Positions 610–614 match the 'KMSKS' region motif; that stretch reads KMSKS. Position 613 (lysine 613) interacts with ATP. Residues cysteine 895, cysteine 898, cysteine 910, and cysteine 913 each coordinate Zn(2+).

The protein belongs to the class-I aminoacyl-tRNA synthetase family. IleS type 1 subfamily. Monomer. It depends on Zn(2+) as a cofactor.

The protein resides in the cytoplasm. The catalysed reaction is tRNA(Ile) + L-isoleucine + ATP = L-isoleucyl-tRNA(Ile) + AMP + diphosphate. Functionally, catalyzes the attachment of isoleucine to tRNA(Ile). As IleRS can inadvertently accommodate and process structurally similar amino acids such as valine, to avoid such errors it has two additional distinct tRNA(Ile)-dependent editing activities. One activity is designated as 'pretransfer' editing and involves the hydrolysis of activated Val-AMP. The other activity is designated 'posttransfer' editing and involves deacylation of mischarged Val-tRNA(Ile). The chain is Isoleucine--tRNA ligase from Helicobacter pylori (strain P12).